The primary structure comprises 882 residues: MTEQNEINMPTKYEPSNVEAGKYKWWLEKEFFKAEGNSDKKPYSIVIPPPNVTGKLHLGHAWDTTLQDIITRMKRMQGFDTLYLPGMDHAGIATQAKVEAKLKEENISRYDLGREKFVDKTWEWKEEYADFIREQWEKLGLGLDYSRERFTLDAGLSDAVKKVFVTLYNKGLIYRGQYIINWDPEAKTALSDIEVIHKDIEGSFYHLKYPLTDGSGYLEVATTRPETIPGDTAVAVHPKDERYQHLIGKTIMLPILNREIPIVADEYVEREFGSGAVKITPAHDPNDFEVGNRHDLPRIIVMHEDGTMNDNAGKYDGLDRFVARKAIIQDFKDLGLFIKQEPHLHSVGHSERTGAVVEPYLSLQWFVKMEPLAAEALALQKTEDKVNFVPARFEKTYETWMDNIHDWCISRQLWWGHRIPAWYHKETGEIYVGENEPENLDQWEQDEDVLDTWFSSALWPFSTMGWPDTENPDYKHFFPTNTLVTGYDIIFFWVSRMIFQSVEFTGERPFKDTLIHGLVRDSEGRKMSKSLGNGVDPIEVIDKYGADSLRYTLATGSSPGQDLKFSFEKVESTWNFINKIWNASRFVLMNLDGMKYDEIDLSNVTEVSDKWILTRLNETIQAVTSLGEKYEFGEVGRTLYNFIWDDFCDWYIEIAKIPLYGEDEVAKQTTRSVLAYTLNTTMRLLHPFMPFVTEEIWQNLPHEGESITISNWPEVNEQQMDSKASTAMRTLVEVIRAVRNIRAEVNTPLSKSIVLEIKPKDETYKEILEQNISYIERFCNPEKVTIAFDIEPSKTAMTAVVSGAEIFIPLEALIDLDLEIARLEKELEKWNKEVARVQGKLNNERFISKAPENVVAEERLKEKDYLEKKASVLERIETLKEV.

Positions 50–60 (PNVTGKLHLGH) match the 'HIGH' region motif. The 'KMSKS' region signature appears at 526–530 (KMSKS). Lys-529 is an ATP binding site. The stretch at 810–881 (LEALIDLDLE…VLERIETLKE (72 aa)) forms a coiled coil.

It belongs to the class-I aminoacyl-tRNA synthetase family. ValS type 1 subfamily. As to quaternary structure, monomer.

It is found in the cytoplasm. It carries out the reaction tRNA(Val) + L-valine + ATP = L-valyl-tRNA(Val) + AMP + diphosphate. In terms of biological role, catalyzes the attachment of valine to tRNA(Val). As ValRS can inadvertently accommodate and process structurally similar amino acids such as threonine, to avoid such errors, it has a 'posttransfer' editing activity that hydrolyzes mischarged Thr-tRNA(Val) in a tRNA-dependent manner. The sequence is that of Valine--tRNA ligase from Listeria innocua serovar 6a (strain ATCC BAA-680 / CLIP 11262).